We begin with the raw amino-acid sequence, 301 residues long: UDP-N-acetylenolpyruvoylglucosamine reductase 1 (301 aa).

One can recognise an FAD-binding PCMH-type domain in the interval 29-196 (KIGGPADILI…LEAEFQLQIG (168 aa)). R174 is an active-site residue. The Proton donor role is filled by S225. E295 is a catalytic residue.

It belongs to the MurB family. FAD serves as cofactor.

It localises to the cytoplasm. The enzyme catalyses UDP-N-acetyl-alpha-D-muramate + NADP(+) = UDP-N-acetyl-3-O-(1-carboxyvinyl)-alpha-D-glucosamine + NADPH + H(+). Its pathway is cell wall biogenesis; peptidoglycan biosynthesis. In terms of biological role, cell wall formation. The chain is UDP-N-acetylenolpyruvoylglucosamine reductase 1 from Bacillus cereus (strain ZK / E33L).